The following is a 207-amino-acid chain: Dephospho-CoA kinase (207 aa).

One can recognise a DPCK domain in the interval V4–F204. G12–T17 lines the ATP pocket.

It belongs to the CoaE family.

Its subcellular location is the cytoplasm. It catalyses the reaction 3'-dephospho-CoA + ATP = ADP + CoA + H(+). The protein operates within cofactor biosynthesis; coenzyme A biosynthesis; CoA from (R)-pantothenate: step 5/5. In terms of biological role, catalyzes the phosphorylation of the 3'-hydroxyl group of dephosphocoenzyme A to form coenzyme A. The protein is Dephospho-CoA kinase of Aggregatibacter actinomycetemcomitans (Actinobacillus actinomycetemcomitans).